Reading from the N-terminus, the 511-residue chain is MTVILRPGSVPLSDLETIYWTGAPARLDAAFDAGIAKAAARIAEIVAGNAPVYGINTGFGKLASIKIDSSDVATLQRNLILSHCCGVGQPLTEDIVRLIMALKLISLGRGASGVRLELVRLIEAMLDKGVIPLIPEKGSVGASGDLAPLAHMAAVMMGHGEAFFAGERMKGDAALKAAGLSPVTLAAKEGLALINGTQVSTALALAGLFRAHRAGQAALITGALSTDAAMGSSAPFHPDIHTLRGHKGQIDTAAALRQLLTGSPIRQSHIEGDERVQDPYCIRCQPQVDGACLDLLRSVAATLTIEANAVTDNPLVLSDNSVVSGGNFHAEPVAFAADQIALAVCEIGAISQRRIALLVDPALSYGLPAFLAKKPGLNSGLMIAEVTSAALMSENKQLSHPASVDSTPTSANQEDHVSMACHGARRLLQMTENLFSIIGIEALAAVQGIEFRAPLTTSPELQKAAAAVRGVSSSIEEDRYMADDLKAAGDLVASGRLAAAVSAGILPKLEN.

The 5-imidazolinone (Ala-Gly) cross-link spans 142 to 144 (ASG). S143 is subject to 2,3-didehydroalanine (Ser).

This sequence belongs to the PAL/histidase family. Contains an active site 4-methylidene-imidazol-5-one (MIO), which is formed autocatalytically by cyclization and dehydration of residues Ala-Ser-Gly.

It localises to the cytoplasm. It catalyses the reaction L-histidine = trans-urocanate + NH4(+). It participates in amino-acid degradation; L-histidine degradation into L-glutamate; N-formimidoyl-L-glutamate from L-histidine: step 1/3. The polypeptide is Histidine ammonia-lyase (hutH) (Rhizobium meliloti (strain 1021) (Ensifer meliloti)).